Here is a 538-residue protein sequence, read N- to C-terminus: Translation initiation factor IF-3, chloroplastic (538 aa).

The N-terminal 140 residues, M1–F140, are a transit peptide targeting the chloroplast. The interval S141–L290 is head. Disordered stretches follow at residues A146 to K165 and R188 to S210. The segment at S291–E474 is IF-3 like. The disordered stretch occupies residues A484 to S538. Positions E493 to E530 are enriched in acidic residues.

Belongs to the IF-3 family. Monomer. In terms of processing, the N-terminus is blocked.

The protein localises to the plastid. It localises to the chloroplast. Involved in chloroplast protein synthesis. It enhances the poly(A,U,G)-dependent binding of the initiator tRNA to chloroplast 30S subunits. The chain is Translation initiation factor IF-3, chloroplastic from Euglena gracilis.